The chain runs to 234 residues: Nuclear ubiquitous casein and cyclin-dependent kinase substrate 1 (234 aa).

The interval 1 to 234 (MSRPVRNRKV…SEDEASSGED (234 aa)) is disordered. Tyrosine 13 carries the phosphotyrosine modification. Phosphoserine is present on residues serine 14 and serine 19. Tyrosine 26 carries the phosphotyrosine modification. Residues 35 to 51 (KKIRSSPREAKNKRRSG) are compositionally biased toward basic residues. Phosphoserine occurs at positions 54, 58, 61, 73, 75, and 79. The segment covering 64-77 (KDVKTKKDDSHSAE) has biased composition (basic and acidic residues). Residues 91–100 (QQRQAASKAA) are compositionally biased toward low complexity. Residues 111-124 (VGSEEEPEEDDEAP) show a composition bias toward acidic residues. Residues serine 113, serine 130, serine 132, and serine 144 each carry the phosphoserine modification. Acidic residues predominate over residues 132–145 (SDEDFLMEDDDDSD). A compositionally biased stretch (basic residues) spans 149-174 (SKKKNKKMVKKSKPERKEKKMPKPRL). Threonine 179 is subject to Phosphothreonine. At serine 181 the chain carries Phosphoserine. Over residues 185 to 199 (GKAKVGRPTASKKSK) the composition is skewed to basic residues. Residue threonine 202 is modified to Phosphothreonine. Phosphoserine is present on residues serine 204, serine 214, serine 225, and serine 231. Positions 223–234 (EGSEDEASSGED) are enriched in acidic residues.

In terms of assembly, does not interact with RAD51. Post-translationally, phosphorylated in an ATM-dependent manner in response to DNA damage. Phosphorylated by CDK1 and casein kinase.

The protein resides in the nucleus. Its subcellular location is the chromosome. Functionally, chromatin-associated protein involved in DNA repair by promoting homologous recombination (HR). Binds double-stranded DNA (dsDNA) and secondary DNA structures, such as D-loop structures, but with less affinity than RAD51AP1. The chain is Nuclear ubiquitous casein and cyclin-dependent kinase substrate 1 (Nucks1) from Mus musculus (Mouse).